The primary structure comprises 219 residues: Resolvase (219 aa).

The region spanning 15–159 (VARIYLRAST…EDRRERQRQG (145 aa)) is the Resolvase/invertase-type recombinase catalytic domain. The active-site O-(5'-phospho-DNA)-serine intermediate is serine 23.

It belongs to the site-specific recombinase resolvase family.

Its function is as follows. Involved in plasmid partition. This is Resolvase (parA) from Escherichia coli.